The chain runs to 366 residues: Carbamoyl phosphate synthase small chain (366 aa).

Positions M1 to D168 are CPSase. L-glutamine-binding residues include S45, G220, and G222. The 192-residue stretch at K172–E363 folds into the Glutamine amidotransferase type-1 domain. The Nucleophile role is filled by C247. Residues L248, Q251, N289, G291, and F292 each coordinate L-glutamine. Catalysis depends on residues H336 and E338.

This sequence belongs to the CarA family. Composed of two chains; the small (or glutamine) chain promotes the hydrolysis of glutamine to ammonia, which is used by the large (or ammonia) chain to synthesize carbamoyl phosphate. Tetramer of heterodimers (alpha,beta)4.

The enzyme catalyses hydrogencarbonate + L-glutamine + 2 ATP + H2O = carbamoyl phosphate + L-glutamate + 2 ADP + phosphate + 2 H(+). It carries out the reaction L-glutamine + H2O = L-glutamate + NH4(+). The protein operates within amino-acid biosynthesis; L-arginine biosynthesis; carbamoyl phosphate from bicarbonate: step 1/1. It participates in pyrimidine metabolism; UMP biosynthesis via de novo pathway; (S)-dihydroorotate from bicarbonate: step 1/3. In terms of biological role, small subunit of the glutamine-dependent carbamoyl phosphate synthetase (CPSase). CPSase catalyzes the formation of carbamoyl phosphate from the ammonia moiety of glutamine, carbonate, and phosphate donated by ATP, constituting the first step of 2 biosynthetic pathways, one leading to arginine and/or urea and the other to pyrimidine nucleotides. The small subunit (glutamine amidotransferase) binds and cleaves glutamine to supply the large subunit with the substrate ammonia. The polypeptide is Carbamoyl phosphate synthase small chain (Methanococcus maripaludis (strain C6 / ATCC BAA-1332)).